A 169-amino-acid chain; its full sequence is Inorganic pyrophosphatase (169 aa).

Positions 20, 34, and 46 each coordinate substrate. Mg(2+)-binding residues include Asp56, Asp61, and Asp93. Residue Tyr130 coordinates substrate.

The protein belongs to the PPase family. As to quaternary structure, homohexamer. Requires Mg(2+) as cofactor.

Its subcellular location is the cytoplasm. The catalysed reaction is diphosphate + H2O = 2 phosphate + H(+). Functionally, catalyzes the hydrolysis of inorganic pyrophosphate (PPi) forming two phosphate ions. This Methanosarcina mazei (strain ATCC BAA-159 / DSM 3647 / Goe1 / Go1 / JCM 11833 / OCM 88) (Methanosarcina frisia) protein is Inorganic pyrophosphatase.